A 344-amino-acid chain; its full sequence is uncharacterized protein (344 aa).

A signal peptide spans 1–28 (MNKKSLNIVATLGILLVLAFSGCVDQSA).

This sequence belongs to the bacterial solute-binding protein 1 family. WtpA subfamily.

This is an uncharacterized protein from Methanococcus maripaludis (strain C7 / ATCC BAA-1331).